A 677-amino-acid chain; its full sequence is Methionine--tRNA ligase (677 aa).

The 'HIGH' region motif lies at 15–25 (PYANGSIHLGH). Positions 146, 149, 159, and 162 each coordinate Zn(2+). Residues 333–337 (KMSKS) carry the 'KMSKS' region motif. Residue lysine 336 participates in ATP binding. The 103-residue stretch at 575-677 (DFAKVDLRVA…AGAKPGHQVK (103 aa)) folds into the tRNA-binding domain.

The protein belongs to the class-I aminoacyl-tRNA synthetase family. MetG type 1 subfamily. As to quaternary structure, homodimer. Requires Zn(2+) as cofactor.

The protein localises to the cytoplasm. It catalyses the reaction tRNA(Met) + L-methionine + ATP = L-methionyl-tRNA(Met) + AMP + diphosphate. Its function is as follows. Is required not only for elongation of protein synthesis but also for the initiation of all mRNA translation through initiator tRNA(fMet) aminoacylation. This Escherichia coli O17:K52:H18 (strain UMN026 / ExPEC) protein is Methionine--tRNA ligase.